The chain runs to 332 residues: GLIPR1-like protein 2 (332 aa).

Positions 57–191 constitute an SCP domain; that stretch reads LHNELRGTVF…THAALFICNY (135 aa). N-linked (GlcNAc...) asparagine glycosylation occurs at Asn-145. Residues 253–273 traverse the membrane as a helical segment; it reads IFILFLRVASLLLCVIVVLIV. Residues 293 to 332 form a disordered region; it reads EGKTEVEIVMEEGEGEGEGGEGEGEGEEKEEEEMLEEDEQ. Residues 300-332 are compositionally biased toward acidic residues; the sequence is IVMEEGEGEGEGGEGEGEGEEKEEEEMLEEDEQ.

Belongs to the CRISP family.

Its subcellular location is the membrane. The protein is GLIPR1-like protein 2 (Glipr1l2) of Mus musculus (Mouse).